The primary structure comprises 359 residues: Phospho-N-acetylmuramoyl-pentapeptide-transferase (359 aa).

A run of 10 helical transmembrane segments spans residues arginine 7–tyrosine 27, isoleucine 28–isoleucine 48, methionine 82–valine 102, aspartate 103–leucine 123, alanine 147–isoleucine 167, isoleucine 179–threonine 199, aspartate 203–isoleucine 223, leucine 229–tyrosine 249, isoleucine 256–leucine 276, and isoleucine 337–isoleucine 357.

The protein belongs to the glycosyltransferase 4 family. MraY subfamily. Mg(2+) is required as a cofactor.

The protein localises to the cell inner membrane. The enzyme catalyses UDP-N-acetyl-alpha-D-muramoyl-L-alanyl-gamma-D-glutamyl-meso-2,6-diaminopimeloyl-D-alanyl-D-alanine + di-trans,octa-cis-undecaprenyl phosphate = di-trans,octa-cis-undecaprenyl diphospho-N-acetyl-alpha-D-muramoyl-L-alanyl-D-glutamyl-meso-2,6-diaminopimeloyl-D-alanyl-D-alanine + UMP. It participates in cell wall biogenesis; peptidoglycan biosynthesis. Functionally, catalyzes the initial step of the lipid cycle reactions in the biosynthesis of the cell wall peptidoglycan: transfers peptidoglycan precursor phospho-MurNAc-pentapeptide from UDP-MurNAc-pentapeptide onto the lipid carrier undecaprenyl phosphate, yielding undecaprenyl-pyrophosphoryl-MurNAc-pentapeptide, known as lipid I. The polypeptide is Phospho-N-acetylmuramoyl-pentapeptide-transferase (Prochlorococcus marinus subsp. pastoris (strain CCMP1986 / NIES-2087 / MED4)).